The primary structure comprises 423 residues: Histidine--tRNA ligase (423 aa).

This sequence belongs to the class-II aminoacyl-tRNA synthetase family. As to quaternary structure, homodimer.

The protein localises to the cytoplasm. It catalyses the reaction tRNA(His) + L-histidine + ATP = L-histidyl-tRNA(His) + AMP + diphosphate + H(+). The sequence is that of Histidine--tRNA ligase from Rhodococcus jostii (strain RHA1).